A 97-amino-acid chain; its full sequence is Small integral membrane protein 8 (97 aa).

A disordered region spans residues 1 to 24 (MSSAPEPPTFKKEPPKEKEFQSPG). Residues 9 to 20 (TFKKEPPKEKEF) show a composition bias toward basic and acidic residues. Residues 48–70 (PVMAFGLVTLSLCVAYIGYLHAI) form a helical membrane-spanning segment.

Belongs to the SMIM8 family.

It localises to the membrane. The chain is Small integral membrane protein 8 (SMIM8) from Homo sapiens (Human).